The following is a 215-amino-acid chain: Pyridoxine/pyridoxamine 5'-phosphate oxidase (215 aa).

Substrate is bound by residues 9–12 and Lys67; that span reads RRDY. Residues 62-67, 77-78, Lys84, and Gln106 contribute to the FMN site; these read RVVLLK and FT. Substrate contacts are provided by Tyr124, Arg128, and Ser132. Residues 141–142 and Trp186 contribute to the FMN site; that span reads QS. 192–194 is a substrate binding site; it reads RLH. An FMN-binding site is contributed by Arg196.

The protein belongs to the pyridoxamine 5'-phosphate oxidase family. Homodimer. FMN serves as cofactor.

It carries out the reaction pyridoxamine 5'-phosphate + O2 + H2O = pyridoxal 5'-phosphate + H2O2 + NH4(+). The catalysed reaction is pyridoxine 5'-phosphate + O2 = pyridoxal 5'-phosphate + H2O2. It participates in cofactor metabolism; pyridoxal 5'-phosphate salvage; pyridoxal 5'-phosphate from pyridoxamine 5'-phosphate: step 1/1. Its pathway is cofactor metabolism; pyridoxal 5'-phosphate salvage; pyridoxal 5'-phosphate from pyridoxine 5'-phosphate: step 1/1. Functionally, catalyzes the oxidation of either pyridoxine 5'-phosphate (PNP) or pyridoxamine 5'-phosphate (PMP) into pyridoxal 5'-phosphate (PLP). The chain is Pyridoxine/pyridoxamine 5'-phosphate oxidase from Chromohalobacter salexigens (strain ATCC BAA-138 / DSM 3043 / CIP 106854 / NCIMB 13768 / 1H11).